Here is a 531-residue protein sequence, read N- to C-terminus: Dihydropyrimidinase (531 aa).

Residues histidine 103, histidine 105, and lysine 193 each contribute to the Zn(2+) site. Position 193 is an N6-carboxylysine (lysine 193). A substrate-binding site is contributed by tyrosine 198. Positions 226 and 282 each coordinate Zn(2+). Substrate is bound at residue serine 332. Aspartate 359 contacts Zn(2+). Residue asparagine 380 participates in substrate binding.

It belongs to the metallo-dependent hydrolases superfamily. Hydantoinase/dihydropyrimidinase family. In terms of assembly, homotetramer. The cofactor is Zn(2+). In terms of processing, carboxylation allows a single lysine to coordinate two zinc ions.

It localises to the endoplasmic reticulum. The catalysed reaction is 5,6-dihydrouracil + H2O = 3-(carbamoylamino)propanoate + H(+). The protein operates within amino-acid biosynthesis; beta-alanine biosynthesis. Functionally, catalyzes the second step of the reductive pyrimidine degradation, the reversible hydrolytic ring opening of dihydropyrimidines. Can catalyze the ring opening of 5,6-dihydrouracil to N-carbamoyl-alanine and of 5,6-dihydrothymine to N-carbamoyl-amino isobutyrate. Involved in the recycling of nitrogen from nucleobases to general nitrogen metabolism. The sequence is that of Dihydropyrimidinase from Arabidopsis thaliana (Mouse-ear cress).